A 100-amino-acid chain; its full sequence is NADH-quinone oxidoreductase subunit K 1 (100 aa).

3 helical membrane-spanning segments follow: residues 3–23, 28–48, and 60–80; these read IIKA…LGVI, LITV…ALVA, and IFAF…LGLI.

Belongs to the complex I subunit 4L family. As to quaternary structure, NDH-1 is composed of 14 different subunits. Subunits NuoA, H, J, K, L, M, N constitute the membrane sector of the complex.

It is found in the cell inner membrane. It carries out the reaction a quinone + NADH + 5 H(+)(in) = a quinol + NAD(+) + 4 H(+)(out). Functionally, NDH-1 shuttles electrons from NADH, via FMN and iron-sulfur (Fe-S) centers, to quinones in the respiratory chain. The immediate electron acceptor for the enzyme in this species is believed to be ubiquinone. Couples the redox reaction to proton translocation (for every two electrons transferred, four hydrogen ions are translocated across the cytoplasmic membrane), and thus conserves the redox energy in a proton gradient. This chain is NADH-quinone oxidoreductase subunit K 1, found in Aquifex aeolicus (strain VF5).